A 383-amino-acid chain; its full sequence is tRNA-specific 2-thiouridylase MnmA (383 aa).

ATP-binding positions include Gly9–Ser16 and Met35. Residues Asn95–Asp97 form an interaction with target base in tRNA region. Cys100 serves as the catalytic Nucleophile. Cys100 and Cys198 form a disulfide bridge. Residue Gly124 participates in ATP binding. The interval Lys148–Gln150 is interaction with tRNA. The active-site Cysteine persulfide intermediate is the Cys198. The interval Arg310–Tyr311 is interaction with tRNA.

It belongs to the MnmA/TRMU family.

The protein localises to the cytoplasm. The catalysed reaction is S-sulfanyl-L-cysteinyl-[protein] + uridine(34) in tRNA + AH2 + ATP = 2-thiouridine(34) in tRNA + L-cysteinyl-[protein] + A + AMP + diphosphate + H(+). Its function is as follows. Catalyzes the 2-thiolation of uridine at the wobble position (U34) of tRNA, leading to the formation of s(2)U34. This is tRNA-specific 2-thiouridylase MnmA from Paraburkholderia phytofirmans (strain DSM 17436 / LMG 22146 / PsJN) (Burkholderia phytofirmans).